Here is a 72-residue protein sequence, read N- to C-terminus: Large ribosomal subunit protein bL31 (72 aa).

It belongs to the bacterial ribosomal protein bL31 family. Type A subfamily. Part of the 50S ribosomal subunit.

Binds the 23S rRNA. The sequence is that of Large ribosomal subunit protein bL31 from Deinococcus geothermalis (strain DSM 11300 / CIP 105573 / AG-3a).